A 179-amino-acid chain; its full sequence is Large ribosomal subunit protein uL5 (179 aa).

It belongs to the universal ribosomal protein uL5 family. Part of the 50S ribosomal subunit; part of the 5S rRNA/L5/L18/L25 subcomplex. Contacts the 5S rRNA and the P site tRNA. Forms a bridge to the 30S subunit in the 70S ribosome.

This is one of the proteins that bind and probably mediate the attachment of the 5S RNA into the large ribosomal subunit, where it forms part of the central protuberance. In the 70S ribosome it contacts protein S13 of the 30S subunit (bridge B1b), connecting the 2 subunits; this bridge is implicated in subunit movement. Contacts the P site tRNA; the 5S rRNA and some of its associated proteins might help stabilize positioning of ribosome-bound tRNAs. The protein is Large ribosomal subunit protein uL5 of Pseudomonas putida (strain W619).